The primary structure comprises 218 residues: Probable transaldolase (218 aa).

K83 (schiff-base intermediate with substrate) is an active-site residue.

This sequence belongs to the transaldolase family. Type 3B subfamily.

Its subcellular location is the cytoplasm. The enzyme catalyses D-sedoheptulose 7-phosphate + D-glyceraldehyde 3-phosphate = D-erythrose 4-phosphate + beta-D-fructose 6-phosphate. Its pathway is carbohydrate degradation; pentose phosphate pathway; D-glyceraldehyde 3-phosphate and beta-D-fructose 6-phosphate from D-ribose 5-phosphate and D-xylulose 5-phosphate (non-oxidative stage): step 2/3. Functionally, transaldolase is important for the balance of metabolites in the pentose-phosphate pathway. The polypeptide is Probable transaldolase (Thermotoga petrophila (strain ATCC BAA-488 / DSM 13995 / JCM 10881 / RKU-1)).